Consider the following 345-residue polypeptide: tRNA pseudouridine synthase B (345 aa).

Asp-39 (nucleophile) is an active-site residue.

It belongs to the pseudouridine synthase TruB family. Type 1 subfamily.

It carries out the reaction uridine(55) in tRNA = pseudouridine(55) in tRNA. Responsible for synthesis of pseudouridine from uracil-55 in the psi GC loop of transfer RNAs. The polypeptide is tRNA pseudouridine synthase B (Rickettsia peacockii (strain Rustic)).